The primary structure comprises 387 residues: BTB and MATH domain-containing protein 38 (387 aa).

Positions 79–204 (EGMLKLEIPN…NEMVTVTARV (126 aa)) constitute an MATH domain. In terms of domain architecture, BTB spans 228-295 (CDMTLVINKQ…IYPCHKPITS (68 aa)).

The polypeptide is BTB and MATH domain-containing protein 38 (bath-38) (Caenorhabditis elegans).